The sequence spans 1055 residues: MDS1 and EVI1 complex locus protein EVI1-A (1055 aa).

3 C2H2-type zinc fingers span residues 21 to 48 (YRCE…VTPH), 75 to 97 (HECK…LLSH), and 103 to 125 (YKCD…QMSH). Residues 131–155 (YECENCSKQVFTDPSNLQRHIRSQH) form a C2H2-type 4; degenerate zinc finger. C2H2-type zinc fingers lie at residues 161–183 (HACS…KHIH) and 189–211 (FVCE…KRMH). The segment at 218 to 240 (IKCKDCGQMFSTTSSLNKHRRFC) adopts a C2H2-type 7; atypical zinc-finger fold. Disordered stretches follow at residues 324-345 (PVKG…VNQP), 372-423 (FITE…SDKD), and 531-621 (VPLK…PELP). The span at 332–345 (EQSSKSQSPHVNQP) shows a compositional bias: polar residues. Positions 381–392 (RPHEKISDHSES) are enriched in basic and acidic residues. Residues 399–413 (STPSGSDLETTSGSD) show a composition bias toward polar residues. The Nuclear localization signal motif lies at 422–435 (KDKLKENGKLYKDK). The span at 531–566 (VPLKIEPESPKETKKVQKGKTESPFDLTTKRKEEKA) shows a compositional bias: basic and acidic residues. The CTBP-binding motif 1 motif lies at 554 to 558 (PFDLT). Residues 569 to 583 (NVPSKSGAPTSSNHD) are compositionally biased toward polar residues. The short motif at 585–589 (PLDLS) is the CTBP-binding motif 2 element. Positions 591 to 601 (GSRSRAATTKQ) are enriched in polar residues. The segment covering 602–621 (TEPRKNHIFNEKKDMDPELP) has biased composition (basic and acidic residues). 3 C2H2-type zinc fingers span residues 734 to 756 (YTCR…LRTH), 762 to 785 (YRCK…RNIH), and 791 to 813 (FKCH…LKKH). Disordered stretches follow at residues 813 to 837 (HENG…GPIL) and 922 to 957 (SVDE…EDFK). The span at 816–827 (GNLSGTAASSPH) shows a compositional bias: polar residues. Residues 944 to 954 (DDEDDDDDEEE) are compositionally biased toward acidic residues.

Homooligomer. Interacts with ctbp. Expressed dynamically during embryonic development; in the developing pronephros, specific areas of the brain (forebrain, midbrain and hindbrain), and in the majority of the visceral arch, and head mesenchyme derived from neural crest cells. Within the pronephros, expressed in the ventroposterior region of the pronephros anlagen from stage 20 (and is absent from the splanchnic layer that forms the glomus), then expression becomes restricted to the distal tubule and duct by the tadpole stage. In adults, expressed in various tissues including kidney, lung, testis, spleen and stomach.

The protein resides in the nucleus. Its subcellular location is the nucleus speckle. Its function is as follows. Transcriptional repressor during pronephros development. Plays a role in regionalization of the pronephros; may promote formation of the distal tubule and duct over formation of the glomus and proximal tubule. The polypeptide is MDS1 and EVI1 complex locus protein EVI1-A (mecom-a) (Xenopus laevis (African clawed frog)).